A 156-amino-acid chain; its full sequence is Putative HTH-type transcriptional regulator BadM (156 aa).

The region spanning 4–130 (RLQKSTMCGL…RSVSITSLLK (127 aa)) is the HTH rrf2-type domain. Residues 136-156 (RRKTERGPNGASARHSSAGRA) form a disordered region. Residues 145-156 (GASARHSSAGRA) show a composition bias toward low complexity.

The polypeptide is Putative HTH-type transcriptional regulator BadM (badM) (Rhodopseudomonas palustris (strain ATCC BAA-98 / CGA009)).